The sequence spans 123 residues: Small ribosomal subunit protein uS12 (123 aa).

The tract at residues methionine 1–glycine 32 is disordered. Aspartate 89 bears the 3-methylthioaspartic acid mark. Positions aspartate 103–lysine 123 are disordered. A compositionally biased stretch (basic residues) spans lysine 108 to lysine 123.

This sequence belongs to the universal ribosomal protein uS12 family. In terms of assembly, part of the 30S ribosomal subunit. Contacts proteins S8 and S17. May interact with IF1 in the 30S initiation complex.

Functionally, with S4 and S5 plays an important role in translational accuracy. Interacts with and stabilizes bases of the 16S rRNA that are involved in tRNA selection in the A site and with the mRNA backbone. Located at the interface of the 30S and 50S subunits, it traverses the body of the 30S subunit contacting proteins on the other side and probably holding the rRNA structure together. The combined cluster of proteins S8, S12 and S17 appears to hold together the shoulder and platform of the 30S subunit. The protein is Small ribosomal subunit protein uS12 of Cutibacterium acnes (strain DSM 16379 / KPA171202) (Propionibacterium acnes).